The sequence spans 197 residues: MAERKASVERDTLETQIKASINLDGTGKARFDIGVPFLEHMLDQIARHGLIDLDIVSKGDLHIDDHHTVEDVGITLGQAFAKAIGDKKGIRRYGHAYVPLDEALSRVVIDFSGRPGLQMHVPYTRATVGGFDVDLFQEFFQGFVNHALVSLHIDNLRGTNTHHQIETVFKAFGRALRMAVELDDRMAGQMPSTKGVL.

This sequence belongs to the imidazoleglycerol-phosphate dehydratase family.

Its subcellular location is the cytoplasm. It catalyses the reaction D-erythro-1-(imidazol-4-yl)glycerol 3-phosphate = 3-(imidazol-4-yl)-2-oxopropyl phosphate + H2O. The protein operates within amino-acid biosynthesis; L-histidine biosynthesis; L-histidine from 5-phospho-alpha-D-ribose 1-diphosphate: step 6/9. This is Imidazoleglycerol-phosphate dehydratase from Pseudomonas fluorescens (strain SBW25).